Consider the following 398-residue polypeptide: Ornithine aminotransferase (398 aa).

The residue at position 256 (Lys-256) is an N6-(pyridoxal phosphate)lysine.

The protein belongs to the class-III pyridoxal-phosphate-dependent aminotransferase family. OAT subfamily. It depends on pyridoxal 5'-phosphate as a cofactor.

The protein localises to the cytoplasm. It carries out the reaction a 2-oxocarboxylate + L-ornithine = L-glutamate 5-semialdehyde + an L-alpha-amino acid. It functions in the pathway amino-acid biosynthesis; L-proline biosynthesis; L-glutamate 5-semialdehyde from L-ornithine: step 1/1. Functionally, catalyzes the interconversion of ornithine to glutamate semialdehyde. This chain is Ornithine aminotransferase, found in Oceanobacillus iheyensis (strain DSM 14371 / CIP 107618 / JCM 11309 / KCTC 3954 / HTE831).